We begin with the raw amino-acid sequence, 100 residues long: Nucleoid-associated protein ckrop_0143 (100 aa).

Belongs to the YbaB/EbfC family. As to quaternary structure, homodimer.

Its subcellular location is the cytoplasm. It is found in the nucleoid. Binds to DNA and alters its conformation. May be involved in regulation of gene expression, nucleoid organization and DNA protection. The chain is Nucleoid-associated protein ckrop_0143 from Corynebacterium kroppenstedtii (strain DSM 44385 / JCM 11950 / CIP 105744 / CCUG 35717).